The sequence spans 241 residues: Terpene cyclase terB (241 aa).

Transmembrane regions (helical) follow at residues 19–39 (LADT…GAMI), 48–68 (YCMG…YTLV), 75–95 (VELA…FAAT), 114–134 (LIFL…AAEI), and 137–157 (ALAY…GGVC). An N-linked (GlcNAc...) asparagine glycan is attached at Asn163. The next 2 membrane-spanning stretches (helical) occupy residues 169–189 (SVTL…FAFL) and 198–218 (FAWL…LADI).

Belongs to the paxB family.

It is found in the membrane. The protein operates within secondary metabolite biosynthesis. Functionally, terpene cyclase; part of the gene cluster that mediates the biosynthesis of terpendoles, indole-diterpene (IDT) mycotoxins including terpendole I, terpendole K, terpendole C, as well as the kinesin Eg5 inhibitor terpendole E. Terpendoles biosynthesis begins with the synthesis of geranylgeranyl diphosphate (GGPP) by a yet unidentified GGPP synthase. Condensation of indole-3-glycerol phosphate with GGPP by the prenyltransferase terC then forms 3-geranylgeranylindole (3-GGI), followed by epoxidation and cyclization of this intermediate (by the FAD-dependent monooxygeanse terM and the terpene cyclase terB) to form paspaline. The cytochrome monooxygenase terQ then hydroxylates paspalline at C-11 to yield terpendole E. The cytochrome monooxygenase terP converts terpendole E to 13-desoxyterpendole I, and terQ converts 13-desoxyterpendole I into terpendole I. TerF and terK are required for conversion of terpendole I to terpendole C which is further converted to terpendole K. This chain is Terpene cyclase terB, found in Tolypocladium album (Soil fungus).